Reading from the N-terminus, the 535-residue chain is MTKYIFVTGGVVSSLGKGIVAASLGRLLKNRGLNVTIQKFDPYINVDPGTMSPYQHGEVFVTDDGAETDLDLGHYERFIDINLNKFSNVTTGKIYSTVLKKERRGDYLGGTVQVIPHITNELKDRVYRAGKETNADVVITEIGGTVGDIESLPFLEAIRQMKSDIGRENVMYIHCTLVPYIKAAGELKTKPTQHSVKELRSLGIQPNIIVVRTEMPISQDMKDKIALFCDIDTKAVIECEDADNLYSIPLELQKQGLDKLVCEHMKLACKEAEMSEWKELVNKVSNLSQTITIGLVGKYVELPDAYISVVESLRHAGYAFDTDVKVKWINAEEVTENNIAELTSGTDGIIVPGGFGDRGVEGKIVATKYARENNIPFLGICLGMQVASIEYARNVLGLKGAHSAEIDPSTQYPIIDLLPEQKDVEDLGGTLRLGLYPCKLEEGTKAFEVYQDEVVYERHRHRYEFNNEFRQQMEEQGFVFSGTSPDGRLVEIIELKDHPWFVASQFHPEFKSRPTRPQPLFKGFIGASVEAANQK.

The interval 1–267 is amidoligase domain; that stretch reads MTKYIFVTGG…DKLVCEHMKL (267 aa). A CTP-binding site is contributed by Ser-13. Residue Ser-13 participates in UTP binding. Residue 14-19 participates in ATP binding; that stretch reads SLGKGI. Tyr-54 serves as a coordination point for L-glutamine. Asp-71 contacts ATP. Positions 71 and 141 each coordinate Mg(2+). CTP is bound by residues 148–150, 188–193, and Lys-224; these read DIE and KTKPTQ. UTP-binding positions include 188-193 and Lys-224; that span reads KTKPTQ. The 243-residue stretch at 292–534 folds into the Glutamine amidotransferase type-1 domain; the sequence is TIGLVGKYVE…IGASVEAANQ (243 aa). Position 354 (Gly-354) interacts with L-glutamine. Cys-381 acts as the Nucleophile; for glutamine hydrolysis in catalysis. L-glutamine contacts are provided by residues 382–385, Glu-405, and Arg-462; that span reads LGMQ. Residues His-507 and Glu-509 contribute to the active site.

This sequence belongs to the CTP synthase family. As to quaternary structure, homotetramer. Interacts with BrxC.

The enzyme catalyses UTP + L-glutamine + ATP + H2O = CTP + L-glutamate + ADP + phosphate + 2 H(+). It catalyses the reaction L-glutamine + H2O = L-glutamate + NH4(+). The catalysed reaction is UTP + NH4(+) + ATP = CTP + ADP + phosphate + 2 H(+). It participates in pyrimidine metabolism; CTP biosynthesis via de novo pathway; CTP from UDP: step 2/2. With respect to regulation, allosterically activated by GTP, when glutamine is the substrate; GTP has no effect on the reaction when ammonia is the substrate. The allosteric effector GTP functions by stabilizing the protein conformation that binds the tetrahedral intermediate(s) formed during glutamine hydrolysis. Inhibited by the product CTP, via allosteric rather than competitive inhibition. Its function is as follows. Catalyzes the ATP-dependent amination of UTP to CTP with either L-glutamine or ammonia as the source of nitrogen. Regulates intracellular CTP levels through interactions with the four ribonucleotide triphosphates. In Bacillus subtilis (strain 168), this protein is CTP synthase.